Reading from the N-terminus, the 193-residue chain is Ion-translocating oxidoreductase complex subunit A (193 aa).

6 helical membrane-spanning segments follow: residues 5 to 25 (LLLL…FLGL), 39 to 59 (MGMG…AWAV), 62 to 82 (FILV…LVIA), 102 to 122 (LLGI…VALL), 134 to 154 (AVYG…FAAI), and 171 to 191 (SIAL…SGLV).

The protein belongs to the NqrDE/RnfAE family. The complex is composed of six subunits: RnfA, RnfB, RnfC, RnfD, RnfE and RnfG.

The protein resides in the cell inner membrane. Its function is as follows. Part of a membrane-bound complex that couples electron transfer with translocation of ions across the membrane. In Edwardsiella ictaluri (strain 93-146), this protein is Ion-translocating oxidoreductase complex subunit A.